Reading from the N-terminus, the 175-residue chain is Zinc metalloproteinase-disintegrin-like catroriarin (175 aa).

The Disintegrin domain occupies Asn1–Asn63. Cystine bridges form between Cys3–Cys26, Cys17–Cys23, Cys22–Cys48, Cys35–Cys55, Cys42–Cys74, Cys67–Cys79, Cys101–Cys147, Cys114–Cys124, and Cys131–Cys171. Positions Glu41 to Asp43 match the D/ECD-tripeptide motif. Positions 43, 44, 46, 58, and 59 each coordinate Ca(2+).

The protein belongs to the venom metalloproteinase (M12B) family. P-III subfamily. P-IIIa sub-subfamily. Monomer. Zn(2+) serves as cofactor. Glycosylated. In terms of tissue distribution, expressed by the venom gland.

The protein resides in the secreted. In terms of biological role, snake venom metalloproteinase that impairs hemostasis in the envenomed animal. This Crotalus atrox (Western diamondback rattlesnake) protein is Zinc metalloproteinase-disintegrin-like catroriarin.